Reading from the N-terminus, the 164-residue chain is Phosphopantetheine adenylyltransferase (164 aa).

Serine 10 provides a ligand contact to substrate. ATP is bound by residues 10 to 11 (SF) and histidine 18. Residues lysine 42, threonine 79, and arginine 93 each contribute to the substrate site. ATP-binding positions include 94–96 (GLR), glutamate 104, and 129–135 (VRPIAAT).

This sequence belongs to the bacterial CoaD family. As to quaternary structure, homohexamer. Mg(2+) is required as a cofactor.

It is found in the cytoplasm. It carries out the reaction (R)-4'-phosphopantetheine + ATP + H(+) = 3'-dephospho-CoA + diphosphate. It participates in cofactor biosynthesis; coenzyme A biosynthesis; CoA from (R)-pantothenate: step 4/5. Functionally, reversibly transfers an adenylyl group from ATP to 4'-phosphopantetheine, yielding dephospho-CoA (dPCoA) and pyrophosphate. This Bradyrhizobium sp. (strain BTAi1 / ATCC BAA-1182) protein is Phosphopantetheine adenylyltransferase.